A 102-amino-acid chain; its full sequence is Flagellar hook-basal body complex protein FliE (102 aa).

The protein belongs to the FliE family.

It is found in the bacterial flagellum basal body. The chain is Flagellar hook-basal body complex protein FliE from Oceanobacillus iheyensis (strain DSM 14371 / CIP 107618 / JCM 11309 / KCTC 3954 / HTE831).